The following is a 343-amino-acid chain: Ubiquitin thioesterase OTU1 (343 aa).

Residues 45–123 (RCKAKGGTHL…IVEEDQTRPK (79 aa)) are UBX-like. The OTU domain maps to 144–269 (LTRTAVPADN…GIHYDPLQRN (126 aa)). The cys-loop stretch occupies residues 149 to 155 (VPADNSC). Asp-152 is a catalytic residue. Residue Cys-155 is the Nucleophile of the active site. The variable-loop stretch occupies residues 208 to 218 (IRRDDTWGGAI). The his-loop stretch occupies residues 258–262 (YDGIH). Ile-261 serves as a coordination point for substrate. His-262 is a catalytic residue. An S2 site region spans residues 286–291 (DIVLVQ). The C2H2-type zinc-finger motif lies at 313–337 (LRCMICQKGLTGQAEARDHARETGH). His-337 is a catalytic residue.

As to quaternary structure, interacts with VCP; the interaction is direct. Interacts with FAF2/UBXD8. Interacts with DERL1; however interaction is dependent on the UBAX-like region, suggesting that it may be indirect. Interacts with PLAA, UBXN6 and VCP; may form a complex involved in macroautophagy.

It is found in the cytoplasm. It catalyses the reaction Thiol-dependent hydrolysis of ester, thioester, amide, peptide and isopeptide bonds formed by the C-terminal Gly of ubiquitin (a 76-residue protein attached to proteins as an intracellular targeting signal).. Functionally, hydrolase that can remove conjugated ubiquitin from proteins and participates in endoplasmic reticulum-associated degradation (ERAD) for misfolded lumenal proteins. May act by triming the ubiquitin chain on the associated substrate to facilitate their threading through the VCP/p97 pore. Ubiquitin moieties on substrates may present a steric impediment to the threading process when the substrate is transferred to the VCP pore and threaded through VCP's axial channel. Mediates deubiquitination of 'Lys-27'-, 'Lys-29'- and 'Lys-33'-linked polyubiquitin chains. Also able to hydrolyze 'Lys-11'-linked ubiquitin chains. Cleaves both polyubiquitin and di-ubiquitin. May play a role in macroautophagy, regulating for instance the clearance of damaged lysosomes. May recruit PLAA, UBXN6 and VCP to damaged lysosome membranes decorated with K48-linked ubiquitin chains and remove these chains allowing autophagosome formation. In Mus musculus (Mouse), this protein is Ubiquitin thioesterase OTU1 (Yod1).